Consider the following 252-residue polypeptide: Hsp70-Hsp90 organising protein (252 aa).

TPR repeat units follow at residues 7–40 (AQRL…DPLD), 41–74 (HVLY…KKDW), and 75–108 (PKGY…DPNN). The stretch at 197–239 (EGNDAEERQRQQREEEERRKKKEEEERKKKEEEEMKKQNRTPE) forms a coiled coil. The segment at 199–252 (NDAEERQRQQREEEERRKKKEEEERKKKEEEEMKKQNRTPEQIQGDEHKLKVMN) is disordered. 2 stretches are compositionally biased toward basic and acidic residues: residues 201-233 (AEER…EMKK) and 243-252 (GDEHKLKVMN).

As to quaternary structure, monomer. Homodimer. Forms a complex composed of HOP and chaperones HSP70 and HSP90; the interaction is stronger in the absence of ATP. Interacts (via TPR 1, 2, 3, 7, 8 and 9 repeats) with HSP70 (via C-terminus); the interaction is direct and is stronger in the absence of ATP. Interacts (via TPR 4, 5 and 6 repeats) with HSP90 (via C-terminus); the interaction is direct.

It is found in the cytoplasm. Functionally, acts as a co-chaperone and mediates the association of the chaperones HSP70 and HSP90 probably facilitating substrate transfer from HSP70 to HSP90. Stimulates HSP70 ATPase activity and, in contrast, inhibits HSP90 ATPase activity. The sequence is that of Hsp70-Hsp90 organising protein from Plasmodium falciparum.